A 72-amino-acid polypeptide reads, in one-letter code: Enterobactin biosynthesis protein YbdZ (72 aa).

The protein belongs to the MbtH-like family.

In terms of biological role, involved in the biosynthesis of the siderophore enterobactin (enterochelin), which is a macrocyclic trimeric lactone of N-(2,3-dihydroxybenzoyl)-serine. Plays a role in the catalytic function of EntF. It is required for adenylation of amino acids in non-ribosomal peptide biosynthesis. The polypeptide is Enterobactin biosynthesis protein YbdZ (Escherichia coli (strain K12)).